A 95-amino-acid chain; its full sequence is FXYD domain-containing ion transport regulator 6 (95 aa).

The N-terminal stretch at methionine 1–alanine 18 is a signal peptide. At serine 19 to glutamine 35 the chain is on the extracellular side. The helical transmembrane segment at threonine 36–serine 58 threads the bilayer. Over arginine 59 to asparagine 95 the chain is Cytoplasmic.

The protein belongs to the FXYD family. In terms of assembly, regulatory subunit of the sodium/potassium-transporting ATPase which is composed of a catalytic alpha subunit, a non-catalytic beta subunit and an additional regulatory subunit. The regulatory subunit, a member of the FXYD protein family, modulates the enzymatic activity in a tissue- and isoform-specific way by changing affinities of the Na+/K+-ATPase toward Na(+), K(+) or ATP.

The protein localises to the cell membrane. In terms of biological role, associates with and regulates the activity of the sodium/potassium-transporting ATPase (NKA) which catalyzes the hydrolysis of ATP coupled with the exchange of Na(+) and K(+) ions across the plasma membrane. Reduces the apparent affinity for intracellular Na(+) with no change in the apparent affinity for extracellular K(+). In addition to modulating NKA kinetics, may also function as a regulator of NKA localization to the plasma membrane. This chain is FXYD domain-containing ion transport regulator 6 (FXYD6), found in Macaca fascicularis (Crab-eating macaque).